Here is a 220-residue protein sequence, read N- to C-terminus: MFLGTIYSFKTNTRTPCLLELAKRLDLQVDLVETYHHKFPTDLAAKFPLQKLPVFIGADGFELSEVIAIFKYFYEKGKHNDKEGLGPINEIEEAEMLKWMCFINFDIVTPQIVRPWVDMFRGSVPYEDKAFKESAARAIDSLKIINELVKDRTYLVGDRFTLADLFFGSMLRRFFHSIIDEKTRKELPHLTRYYVTMFHQAKLEAYYPLELPLTVTVPNN.

Residues 1–81 (MFLGTIYSFK…YFYEKGKHND (81 aa)) enclose the GST N-terminal domain. In terms of domain architecture, GST C-terminal spans 89-216 (NEIEEAEMLK…YPLELPLTVT (128 aa)).

This sequence belongs to the GST superfamily.

The protein resides in the cytoplasm. It catalyses the reaction RX + glutathione = an S-substituted glutathione + a halide anion + H(+). Its function is as follows. Involved in the oxidative stress response and detoxification. The sequence is that of Putative glutathione S-transferase C460.02c from Schizosaccharomyces pombe (strain 972 / ATCC 24843) (Fission yeast).